The sequence spans 456 residues: Cobyrinate a,c-diamide synthase (456 aa).

The region spanning 247 to 439 is the GATase cobBQ-type domain; it reads PIAIARDRAF…LHLHFGGKPW (193 aa). Residue C330 is the Nucleophile of the active site.

It belongs to the CobB/CbiA family. It depends on Mg(2+) as a cofactor.

It catalyses the reaction cob(II)yrinate + 2 L-glutamine + 2 ATP + 2 H2O = cob(II)yrinate a,c diamide + 2 L-glutamate + 2 ADP + 2 phosphate + 2 H(+). It participates in cofactor biosynthesis; adenosylcobalamin biosynthesis; cob(II)yrinate a,c-diamide from sirohydrochlorin (anaerobic route): step 10/10. Functionally, catalyzes the ATP-dependent amidation of the two carboxylate groups at positions a and c of cobyrinate, using either L-glutamine or ammonia as the nitrogen source. This chain is Cobyrinate a,c-diamide synthase, found in Synechococcus sp. (strain ATCC 27144 / PCC 6301 / SAUG 1402/1) (Anacystis nidulans).